A 459-amino-acid chain; its full sequence is Vasoactive intestinal polypeptide receptor 1 (459 aa).

A signal peptide spans 1-30 (MRPPSLPPARWLCVLAGALACALGPAGSRA). Residues 31–142 (ASPHQECEYL…EQQQTEFYDA (112 aa)) are Extracellular-facing. 5 disulfide bridges follow: Cys37/Cys209, Cys50/Cys72, Cys63/Cys105, Cys86/Cys122, and Cys216/Cys286. Asn58, Asn69, Asn100, and Asn104 each carry an N-linked (GlcNAc...) asparagine glycan. Residues 143–167 (VKTGYTIGYSLSLASLLVAMAILSL) form a helical membrane-spanning segment. Residues 168–175 (FRKLHCTR) are Cytoplasmic-facing. A helical transmembrane segment spans residues 176–197 (NYIHMHLFMSFILRATAVFIKD). The Extracellular portion of the chain corresponds to 198-217 (MALFNNGETDHCSEASVSCK). A helical membrane pass occupies residues 218–242 (AAVVFFQYCVMANFFWLLVEGLYLH). Topologically, residues 243 to 255 (TLLAVSFFSERKY) are cytoplasmic. The helical transmembrane segment at 256 to 277 (FWGYILIGWGVPSVFIMIWTIV) threads the bilayer. At 278-293 (RIHFEDFGCWDTIINS) the chain is on the extracellular side. Residue Asn292 is glycosylated (N-linked (GlcNAc...) asparagine). The chain crosses the membrane as a helical span at residues 294 to 318 (SLWWIIKGPILISILVNFILFICII). At 319–340 (RILVQKLRPPDIGKNDSSPYSR) the chain is on the cytoplasmic side. The helical transmembrane segment at 341–361 (LAKSTLLLIPLFGVHYVMFAF) threads the bilayer. Topologically, residues 362–369 (FPDNFKAQ) are extracellular. A helical transmembrane segment spans residues 370–393 (VKMVFELVVGSFQGFVVAILYCFL). At 394-459 (NGEVQAELRR…SSFQAEVSLV (66 aa)) the chain is on the cytoplasmic side.

This sequence belongs to the G-protein coupled receptor 2 family. As to quaternary structure, interacts with ADCYAP1/PACAP; activated by both PACAP27 and PACAP38 neuropeptides. Interacts with VIP; the interaction results in VIPR1 activation.

Its subcellular location is the cell membrane. In terms of biological role, g protein-coupled receptor activated by the neuropeptides vasoactive intestinal peptide (VIP) and pituitary adenylate cyclase-activating polypeptide (ADCYAP1/PACAP). Binds VIP and both PACAP27 and PACAP38 bioactive peptides with the following order of ligand affinity VIP = PACAP27 &gt; PACAP38. Ligand binding causes a conformation change that triggers signaling via guanine nucleotide-binding proteins (G proteins) and modulates the activity of downstream effectors. Activates cAMP-dependent pathway. The sequence is that of Vasoactive intestinal polypeptide receptor 1 from Mus musculus (Mouse).